The sequence spans 324 residues: Homoserine kinase (324 aa).

87–97 (PVARGMGSSAA) lines the ATP pocket.

This sequence belongs to the GHMP kinase family. Homoserine kinase subfamily.

It is found in the cytoplasm. The enzyme catalyses L-homoserine + ATP = O-phospho-L-homoserine + ADP + H(+). It functions in the pathway amino-acid biosynthesis; L-threonine biosynthesis; L-threonine from L-aspartate: step 4/5. In terms of biological role, catalyzes the ATP-dependent phosphorylation of L-homoserine to L-homoserine phosphate. This Symbiobacterium thermophilum (strain DSM 24528 / JCM 14929 / IAM 14863 / T) protein is Homoserine kinase.